A 287-amino-acid chain; its full sequence is Flagellin (287 aa).

The protein belongs to the bacterial flagellin family.

It localises to the secreted. It is found in the bacterial flagellum. Its function is as follows. Flagellin is the subunit protein which polymerizes to form the filaments of bacterial flagella. This is Flagellin (flaA) from Listeria monocytogenes serovar 1/2a (strain ATCC BAA-679 / EGD-e).